Reading from the N-terminus, the 429-residue chain is Adenylosuccinate synthetase (429 aa).

GTP contacts are provided by residues 12–18 (GDEGKGK) and 40–42 (GHT). The active-site Proton acceptor is the D13. Mg(2+) contacts are provided by D13 and G40. Residues 13-16 (DEGK), 38-41 (NAGH), T129, R143, Q224, T239, and R303 contribute to the IMP site. The active-site Proton donor is the H41. Position 299 to 305 (299 to 305 (VTTGRAR)) interacts with substrate. GTP contacts are provided by residues R305, 331–333 (KLD), and 413–415 (GVG).

The protein belongs to the adenylosuccinate synthetase family. As to quaternary structure, homodimer. Requires Mg(2+) as cofactor.

It localises to the cytoplasm. It catalyses the reaction IMP + L-aspartate + GTP = N(6)-(1,2-dicarboxyethyl)-AMP + GDP + phosphate + 2 H(+). Its pathway is purine metabolism; AMP biosynthesis via de novo pathway; AMP from IMP: step 1/2. In terms of biological role, plays an important role in the de novo pathway of purine nucleotide biosynthesis. Catalyzes the first committed step in the biosynthesis of AMP from IMP. This chain is Adenylosuccinate synthetase, found in Rhodococcus opacus (strain B4).